The chain runs to 814 residues: Echinoderm microtubule-associated protein-like 1 (814 aa).

Residues 31-72 adopt a coiled-coil conformation; sequence SMEISDRIASLEQRVQMQEDDIQLLKSALADVVRRLNITEEQ. The interval 77-185 is disordered; sequence NRKGPTKARP…EPTFSPEEGY (109 aa). Positions 92-101 are enriched in polar residues; sequence PLRTTVNNGT. Positions 103-115 are enriched in low complexity; sequence LPKKPSASLPSPS. Phosphoserine is present on serine 113. The span at 127–137 shows a compositional bias: polar residues; it reads KSINRTSSSER. Residues 142–152 show a composition bias toward basic and acidic residues; that stretch reads GRRESSGDSKG. Residues 155–167 are compositionally biased toward low complexity; that stretch reads NRTGSTSSSSSGK. The tandem atypical propeller in EMLs stretch occupies residues 175–814; that stretch reads KEPTFSPEEG…DTSIMQWRVI (640 aa). 12 WD repeats span residues 260 to 309, 314 to 357, 362 to 399, 408 to 445, 449 to 488, 492 to 529, 534 to 571, 577 to 612, 616 to 654, 663 to 700, 708 to 767, and 774 to 813; these read EQLQ…IWDS, TLHV…VWDW, RLAD…FWTL, QGLF…VWGK, RISY…SWNG, KLHK…LQGT, FTPI…LWDA, VWDK…VFDT, DLVT…IYGV, RVGK…YWVP, SVET…LFSY, and APSH…QWRV.

The protein belongs to the WD repeat EMAP family. In terms of assembly, homotrimer; self-association is mediated by the N-terminal coiled coil. Does not interact with EML3. Binds repolymerizing microtubules. Binds unpolymerized tubulins via its WD repeat region. Interacts with TASOR.

The protein localises to the cytoplasm. The protein resides in the perinuclear region. It is found in the cytoskeleton. In terms of biological role, modulates the assembly and organization of the microtubule cytoskeleton, and probably plays a role in regulating the orientation of the mitotic spindle and the orientation of the plane of cell division. Required for normal proliferation of neuronal progenitor cells in the developing brain and for normal brain development. Does not affect neuron migration per se. This is Echinoderm microtubule-associated protein-like 1 (Eml1) from Rattus norvegicus (Rat).